Here is a 117-residue protein sequence, read N- to C-terminus: Modulator protein MzrA (117 aa).

Topologically, residues 1 to 9 (MNSPGLRKP) are cytoplasmic. The helical transmembrane segment at 10 to 29 (TIWRPLLLLFPLLALLLSMS) threads the bilayer. Residues 30 to 117 (SPRLPDEVML…THGTIRVARS (88 aa)) lie on the Periplasmic side of the membrane.

The protein belongs to the MzrA family. In terms of assembly, interacts with EnvZ.

Its subcellular location is the cell inner membrane. Its function is as follows. Modulates the activity of the EnvZ/OmpR two-component regulatory system, probably by directly modulating EnvZ enzymatic activity and increasing stability of phosphorylated OmpR. This is Modulator protein MzrA from Dickeya zeae (strain Ech586) (Dickeya dadantii (strain Ech586)).